Here is a 167-residue protein sequence, read N- to C-terminus: Mediator of RNA polymerase II transcription subunit 10 (167 aa).

A disordered region spans residues 54 to 92; it reads STHTKPHPPPPPPPQPTDPTTAAAPALRDNPDPPLSSIQ. The segment covering 60–70 has biased composition (pro residues); the sequence is HPPPPPPPQPT.

It belongs to the Mediator complex subunit 10 family. Component of the Mediator complex.

Its subcellular location is the nucleus. In terms of biological role, component of the Mediator complex, a coactivator involved in the regulated transcription of nearly all RNA polymerase II-dependent genes. Mediator functions as a bridge to convey information from gene-specific regulatory proteins to the basal RNA polymerase II transcription machinery. Mediator is recruited to promoters by direct interactions with regulatory proteins and serves as a scaffold for the assembly of a functional preinitiation complex with RNA polymerase II and the general transcription factors. The protein is Mediator of RNA polymerase II transcription subunit 10 (nut2) of Aspergillus clavatus (strain ATCC 1007 / CBS 513.65 / DSM 816 / NCTC 3887 / NRRL 1 / QM 1276 / 107).